We begin with the raw amino-acid sequence, 123 residues long: Small ribosomal subunit protein uS12 (123 aa).

Residue Asp-89 is modified to 3-methylthioaspartic acid.

Belongs to the universal ribosomal protein uS12 family. Part of the 30S ribosomal subunit. Contacts proteins S8 and S17. May interact with IF1 in the 30S initiation complex.

With S4 and S5 plays an important role in translational accuracy. In terms of biological role, interacts with and stabilizes bases of the 16S rRNA that are involved in tRNA selection in the A site and with the mRNA backbone. Located at the interface of the 30S and 50S subunits, it traverses the body of the 30S subunit contacting proteins on the other side and probably holding the rRNA structure together. The combined cluster of proteins S8, S12 and S17 appears to hold together the shoulder and platform of the 30S subunit. The chain is Small ribosomal subunit protein uS12 from Caulobacter sp. (strain K31).